A 329-amino-acid chain; its full sequence is Very long chain fatty acid elongase 7 (329 aa).

A run of 7 helical transmembrane segments spans residues 26–46 (YPLMSSPFPTIAISLTYAYIV), 66–86 (LIVYNAAQVIFSAWLFYESCI), 114–134 (GCWWYYFSKFTEFFDTFFFVM), 146–166 (VIHHGIMPVSVWWGVKFTPGG), 170–190 (FFGFLNTFVHIFMYAYYMLAA), 205–225 (LTVMQMIQFVLVMVHSFQLFF), and 233–253 (IGFAYFIGAHAVMFYFLFSNF).

Belongs to the ELO family.

Its subcellular location is the membrane. The catalysed reaction is a very-long-chain acyl-CoA + malonyl-CoA + H(+) = a very-long-chain 3-oxoacyl-CoA + CO2 + CoA. Functionally, catalyzes the first and rate-limiting reaction of the four reactions that constitute the long-chain fatty acids elongation cycle. This endoplasmic reticulum-bound enzymatic process allows the addition of 2 carbons to the chain of long- and very long-chain fatty acids (VLCFAs) per cycle. The polypeptide is Very long chain fatty acid elongase 7 (Drosophila melanogaster (Fruit fly)).